Reading from the N-terminus, the 81-residue chain is Putative membrane protein insertion efficiency factor (81 aa).

Positions 60–81 (WNPGGYDPVPTHNTSNSSPMAE) are disordered. Residues 70–81 (THNTSNSSPMAE) show a composition bias toward polar residues.

Belongs to the UPF0161 family.

It is found in the cell inner membrane. Functionally, could be involved in insertion of integral membrane proteins into the membrane. The chain is Putative membrane protein insertion efficiency factor from Stutzerimonas stutzeri (strain A1501) (Pseudomonas stutzeri).